A 115-amino-acid chain; its full sequence is Aspartate 1-decarboxylase (115 aa).

The active-site Schiff-base intermediate with substrate; via pyruvic acid is S25. Position 25 is a pyruvic acid (Ser) (S25). T57 is a substrate binding site. Y58 functions as the Proton donor in the catalytic mechanism. Position 71–73 (71–73 (GAA)) interacts with substrate.

The protein belongs to the PanD family. In terms of assembly, heterooctamer of four alpha and four beta subunits. Pyruvate serves as cofactor. Is synthesized initially as an inactive proenzyme, which is activated by self-cleavage at a specific serine bond to produce a beta-subunit with a hydroxyl group at its C-terminus and an alpha-subunit with a pyruvoyl group at its N-terminus.

Its subcellular location is the cytoplasm. It carries out the reaction L-aspartate + H(+) = beta-alanine + CO2. It participates in cofactor biosynthesis; (R)-pantothenate biosynthesis; beta-alanine from L-aspartate: step 1/1. In terms of biological role, catalyzes the pyruvoyl-dependent decarboxylation of aspartate to produce beta-alanine. The chain is Aspartate 1-decarboxylase from Campylobacter curvus (strain 525.92).